The chain runs to 72 residues: Translation initiation factor IF-1 (72 aa).

Residues 2-72 form the S1-like domain; the sequence is AKEDCIEMQG…SKGRIIFRSR (71 aa).

The protein belongs to the IF-1 family. As to quaternary structure, component of the 30S ribosomal translation pre-initiation complex which assembles on the 30S ribosome in the order IF-2 and IF-3, IF-1 and N-formylmethionyl-tRNA(fMet); mRNA recruitment can occur at any time during PIC assembly.

The protein resides in the cytoplasm. One of the essential components for the initiation of protein synthesis. Stabilizes the binding of IF-2 and IF-3 on the 30S subunit to which N-formylmethionyl-tRNA(fMet) subsequently binds. Helps modulate mRNA selection, yielding the 30S pre-initiation complex (PIC). Upon addition of the 50S ribosomal subunit IF-1, IF-2 and IF-3 are released leaving the mature 70S translation initiation complex. The chain is Translation initiation factor IF-1 from Haemophilus influenzae (strain ATCC 51907 / DSM 11121 / KW20 / Rd).